Consider the following 378-residue polypeptide: Probable mannosyltransferase MNT3 (378 aa).

Topologically, residues 1-4 (MLWH) are cytoplasmic. A helical; Signal-anchor for type II membrane protein membrane pass occupies residues 5-25 (LVFILIAILLLTFSPKIESLF). The Lumenal segment spans residues 26-378 (KSFTINKPTK…TNHFLNILHN (353 aa)). N-linked (GlcNAc...) asparagine glycans are attached at residues N73 and N149.

Belongs to the glycosyltransferase 15 family.

It is found in the membrane. Functionally, transfers an alpha-D-mannosyl residue from GDP-mannose into lipid-linked oligosaccharide, forming an alpha-(1-&gt;2)-D-mannosyl-D-mannose linkage. This Candida albicans (strain SC5314 / ATCC MYA-2876) (Yeast) protein is Probable mannosyltransferase MNT3 (MNT3).